A 307-amino-acid chain; its full sequence is Putative ankyrin repeat protein R229 (307 aa).

6 ANK repeats span residues Ala135–Val164, Asp165–Ala194, Asp196–Ala224, Asn226–Ala254, Arg256–Tyr284, and Ser286–Asp307.

The chain is Putative ankyrin repeat protein R229 from Acanthamoeba polyphaga (Amoeba).